A 504-amino-acid polypeptide reads, in one-letter code: Peroxisomal catalase (504 aa).

Active-site residues include His63 and Asn136. Heme is bound at residue Tyr345. Residues Asn502–Phe504 carry the Microbody targeting signal motif.

This sequence belongs to the catalase family. It depends on heme as a cofactor.

Its subcellular location is the peroxisome matrix. It catalyses the reaction 2 H2O2 = O2 + 2 H2O. In terms of biological role, catalyzes the degradation of hydrogen peroxide (H(2)O(2)) generated by peroxisomal oxidases to water and oxygen, thereby protecting cells from the toxic effects of hydrogen peroxide. The polypeptide is Peroxisomal catalase (CTA1) (Candida boidinii (Yeast)).